A 358-amino-acid polypeptide reads, in one-letter code: DNA integrity scanning protein DisA (358 aa).

In terms of domain architecture, DAC spans 9 to 147 (KQDLSEILQF…ENMKYILKDI (139 aa)). Residues glycine 76, leucine 94, and 107-111 (MRHRT) contribute to the ATP site.

It belongs to the DisA family. In terms of assembly, homooctamer. Requires Mg(2+) as cofactor.

It catalyses the reaction 2 ATP = 3',3'-c-di-AMP + 2 diphosphate. In terms of biological role, participates in a DNA-damage check-point that is active prior to asymmetric division when DNA is damaged. DisA forms globular foci that rapidly scan along the chromosomes during sporulation, searching for lesions. When a lesion is present, DisA pauses at the lesion site. This triggers a cellular response that culminates in a temporary block in sporulation initiation. Functionally, also has diadenylate cyclase activity, catalyzing the condensation of 2 ATP molecules into cyclic di-AMP (c-di-AMP). c-di-AMP acts as a signaling molecule that couples DNA integrity with progression of sporulation. The rise in c-di-AMP level generated by DisA while scanning the chromosome, operates as a positive signal that advances sporulation; upon encountering a lesion, the DisA focus arrests at the damaged site and halts c-di-AMP synthesis. This is DNA integrity scanning protein DisA from Bacillus licheniformis (strain ATCC 14580 / DSM 13 / JCM 2505 / CCUG 7422 / NBRC 12200 / NCIMB 9375 / NCTC 10341 / NRRL NRS-1264 / Gibson 46).